A 228-amino-acid chain; its full sequence is Growth arrest-specific protein 1 homolog (228 aa).

The N-terminal stretch at 1–17 (MRRVILPLVMTVTLCLA) is a signal peptide. 2 N-linked (GlcNAc...) asparagine glycosylation sites follow: N143 and N156. D205 carries the GPI-anchor amidated aspartate lipid modification. Residues 206 to 228 (SSVGHGFNILSAISVYLLTVLVF) constitute a propeptide, removed in mature form.

In terms of tissue distribution, pharynx muscle cells from its early formation, in the two-fold embryo, until the adult stage.

It localises to the cell membrane. Its function is as follows. Role in pharynx function or development. This Caenorhabditis elegans protein is Growth arrest-specific protein 1 homolog (phg-1).